A 186-amino-acid chain; its full sequence is NADH-quinone oxidoreductase subunit C (186 aa).

The disordered stretch occupies residues 166–186 (DSLTPWKGVGRPSDPFDGRKE).

Belongs to the complex I 30 kDa subunit family. As to quaternary structure, NDH-1 is composed of 14 different subunits. Subunits NuoB, C, D, E, F, and G constitute the peripheral sector of the complex.

It is found in the cell inner membrane. It carries out the reaction a quinone + NADH + 5 H(+)(in) = a quinol + NAD(+) + 4 H(+)(out). Functionally, NDH-1 shuttles electrons from NADH, via FMN and iron-sulfur (Fe-S) centers, to quinones in the respiratory chain. The immediate electron acceptor for the enzyme in this species is believed to be ubiquinone. Couples the redox reaction to proton translocation (for every two electrons transferred, four hydrogen ions are translocated across the cytoplasmic membrane), and thus conserves the redox energy in a proton gradient. The chain is NADH-quinone oxidoreductase subunit C from Neorickettsia sennetsu (strain ATCC VR-367 / Miyayama) (Ehrlichia sennetsu).